The primary structure comprises 310 residues: Fe-S cluster assembly protein dre2 (310 aa).

Disordered stretches follow at residues 1–30 and 165–184; these read MAPS…GKRT and APAP…DDND. The tract at residues 24-154 is N-terminal SAM-like domain; that stretch reads ADSGKRTLLL…KMDVGNGAAV (131 aa). The tract at residues 155-202 is linker; the sequence is PLRLGRKKKAAPAPAPVVQPPPIISSDDNDLNDDELIDEDTLLSADDL. Residues 167-177 are compositionally biased toward pro residues; the sequence is APAPVVQPPPI. The [2Fe-2S] cluster site is built by cysteine 212, cysteine 223, cysteine 226, and cysteine 228. The tract at residues 212–228 is fe-S binding site A; the sequence is CQPKAGKRRRACKDCTC. Positions 273, 276, 284, and 287 each coordinate [4Fe-4S] cluster. Short sequence motifs (cx2C motif) lie at residues 273-276 and 284-287; these read CGNC and CDGC. The segment at 273 to 287 is fe-S binding site B; it reads CGNCALGDAFRCDGC.

The protein belongs to the anamorsin family. Monomer. Interacts with tah18. Interacts with mia40. Requires [2Fe-2S] cluster as cofactor. [4Fe-4S] cluster serves as cofactor.

It localises to the cytoplasm. Its subcellular location is the mitochondrion intermembrane space. In terms of biological role, component of the cytosolic iron-sulfur (Fe-S) protein assembly (CIA) machinery required for the maturation of extramitochondrial Fe-S proteins. Part of an electron transfer chain functioning in an early step of cytosolic Fe-S biogenesis, facilitating the de novo assembly of a [4Fe-4S] cluster on the scaffold complex cfd1-nbp35. Electrons are transferred to dre2 from NADPH via the FAD- and FMN-containing protein tah18. Tah18-dre2 are also required for the assembly of the diferric tyrosyl radical cofactor of ribonucleotide reductase (RNR), probably by providing electrons for reduction during radical cofactor maturation in the catalytic small subunit rnr2. The polypeptide is Fe-S cluster assembly protein dre2 (Emericella nidulans (strain FGSC A4 / ATCC 38163 / CBS 112.46 / NRRL 194 / M139) (Aspergillus nidulans)).